The primary structure comprises 90 residues: DNA-binding protein HU-beta (90 aa).

Belongs to the bacterial histone-like protein family. In terms of assembly, heterodimer of an alpha and a beta chain.

In terms of biological role, histone-like DNA-binding protein which is capable of wrapping DNA to stabilize it, and thus to prevent its denaturation under extreme environmental conditions. The polypeptide is DNA-binding protein HU-beta (hupB) (Pseudomonas fluorescens (strain ATCC BAA-477 / NRRL B-23932 / Pf-5)).